The primary structure comprises 763 residues: 5-methyltetrahydropteroyltriglutamate--homocysteine methyltransferase (763 aa).

5-methyltetrahydropteroyltri-L-glutamate contacts are provided by residues 16 to 19 and lysine 117; that span reads RELK. Residues 438 to 440 and glutamate 491 each bind L-homocysteine; that span reads IGS. Residues 438–440 and glutamate 491 each bind L-methionine; that span reads IGS. Residues 522–523 and tryptophan 568 contribute to the 5-methyltetrahydropteroyltri-L-glutamate site; that span reads RC. Aspartate 606 contacts L-homocysteine. L-methionine is bound at residue aspartate 606. Residue glutamate 612 participates in 5-methyltetrahydropteroyltri-L-glutamate binding. Residues histidine 648, cysteine 650, and glutamate 672 each contribute to the Zn(2+) site. Residue histidine 701 is the Proton donor of the active site. Cysteine 733 contributes to the Zn(2+) binding site.

Belongs to the vitamin-B12 independent methionine synthase family. The cofactor is Zn(2+).

It catalyses the reaction 5-methyltetrahydropteroyltri-L-glutamate + L-homocysteine = tetrahydropteroyltri-L-glutamate + L-methionine. It participates in amino-acid biosynthesis; L-methionine biosynthesis via de novo pathway; L-methionine from L-homocysteine (MetE route): step 1/1. Its function is as follows. Catalyzes the transfer of a methyl group from 5-methyltetrahydrofolate to homocysteine resulting in methionine formation. This chain is 5-methyltetrahydropteroyltriglutamate--homocysteine methyltransferase, found in Pseudomonas paraeruginosa (strain DSM 24068 / PA7) (Pseudomonas aeruginosa (strain PA7)).